A 978-amino-acid chain; its full sequence is Transcription factor MYCGRDRAFT_87993 (978 aa).

C2H2-type zinc fingers lie at residues 2–24 (VFCTYCGQSFTRDEHLERHILTH) and 30–52 (FKCFTCHMSFARRDLLQRHYTVH). A DNA-binding region (zn(2)-C6 fungal-type) is located at residues 79 to 105 (CSNCAKTKTKCDKKFPCSRCAGRNLRC). Disordered stretches follow at residues 113–231 (ASKN…SPRF) and 426–445 (THREGRGTSNGSHSPNPSGA). Residues 152-165 (SSSPSSQKSGTPIS) are compositionally biased toward low complexity. Polar residues predominate over residues 432 to 445 (GTSNGSHSPNPSGA).

Its subcellular location is the nucleus. In terms of biological role, transcription factor; part of the gene cluster 29 that mediates the biosynthesis of dihydroxynaphthalene (DHN)-melanin, a bluish-green pigment forming a dark layer in the conidial wall that protects the conidia from UV radiations. This Zymoseptoria tritici (strain CBS 115943 / IPO323) (Speckled leaf blotch fungus) protein is Transcription factor MYCGRDRAFT_87993.